The following is a 629-amino-acid chain: Arginine--tRNA ligase (629 aa).

A 'HIGH' region motif is present at residues V128–H138.

Belongs to the class-I aminoacyl-tRNA synthetase family.

Its subcellular location is the cytoplasm. It carries out the reaction tRNA(Arg) + L-arginine + ATP = L-arginyl-tRNA(Arg) + AMP + diphosphate. In Pyrococcus horikoshii (strain ATCC 700860 / DSM 12428 / JCM 9974 / NBRC 100139 / OT-3), this protein is Arginine--tRNA ligase (argS).